Consider the following 384-residue polypeptide: Actin-binding Rho-activating protein (384 aa).

Residues M1 to G11 are compositionally biased toward basic and acidic residues. Disordered regions lie at residues M1–V20, G32–R159, and E181–G211. The segment covering Q35 to E47 has biased composition (polar residues). A compositionally biased stretch (acidic residues) spans D134–S145. Phosphoserine is present on residues S156 and S191. Actin-binding regions lie at residues E202–A302 and K303–K384. 2 interaction with actin regions span residues S243–G288 and M355–K384.

As to quaternary structure, binds F-actin and ABLIM1, ABLIM2 and ABLIM3. Interaction with ABLIM2 and ABLIM3 enhances activity. In terms of tissue distribution, specifically expressed in heart and skeletal muscles.

Its subcellular location is the cytoplasm. The protein localises to the myofibril. It is found in the sarcomere. The protein resides in the cytoskeleton. Functionally, acts as an activator of serum response factor (SRF)-dependent transcription possibly by inducing nuclear translocation of MKL1 or MKL2 and through a mechanism requiring Rho-actin signaling. In Sus scrofa (Pig), this protein is Actin-binding Rho-activating protein (ABRA).